A 406-amino-acid polypeptide reads, in one-letter code: Succinylornithine transaminase (406 aa).

Lys252 is modified (N6-(pyridoxal phosphate)lysine).

This sequence belongs to the class-III pyridoxal-phosphate-dependent aminotransferase family. AstC subfamily. Requires pyridoxal 5'-phosphate as cofactor.

The catalysed reaction is N(2)-succinyl-L-ornithine + 2-oxoglutarate = N-succinyl-L-glutamate 5-semialdehyde + L-glutamate. It participates in amino-acid degradation; L-arginine degradation via AST pathway; L-glutamate and succinate from L-arginine: step 3/5. Functionally, catalyzes the transamination of N(2)-succinylornithine and alpha-ketoglutarate into N(2)-succinylglutamate semialdehyde and glutamate. Can also act as an acetylornithine aminotransferase. This Escherichia coli O127:H6 (strain E2348/69 / EPEC) protein is Succinylornithine transaminase.